Consider the following 417-residue polypeptide: Dihydrolipoyllysine-residue succinyltransferase component of 2-oxoglutarate dehydrogenase complex (417 aa).

Residues 1–76 (MAEIKVPELA…QVGEIIGTIS (76 aa)) form the Lipoyl-binding domain. Position 42 is an N6-lipoyllysine (Lys-42). The disordered stretch occupies residues 75–191 (ISEGAGESSA…SFDKPVEVQK (117 aa)). Basic and acidic residues-rich tracts occupy residues 89 to 103 (EKTE…EKQA) and 152 to 163 (RKQDVEAYEKPA). A Peripheral subunit-binding (PSBD) domain is found at 123-160 (IASPSARKLAREKGIDLSQVPTGDPLGRVRKQDVEAYE). Over residues 164–182 (SKPAPQQKQQPQAQKAQQS) the composition is skewed to low complexity. Catalysis depends on residues His-388 and Asp-392.

The protein belongs to the 2-oxoacid dehydrogenase family. In terms of assembly, forms a 24-polypeptide structural core with octahedral symmetry. Part of the 2-oxoglutarate dehydrogenase (OGDH) complex composed of E1 (2-oxoglutarate dehydrogenase), E2 (dihydrolipoamide succinyltransferase) and E3 (dihydrolipoamide dehydrogenase); the complex contains multiple copies of the three enzymatic components (E1, E2 and E3). (R)-lipoate is required as a cofactor.

The catalysed reaction is N(6)-[(R)-dihydrolipoyl]-L-lysyl-[protein] + succinyl-CoA = N(6)-[(R)-S(8)-succinyldihydrolipoyl]-L-lysyl-[protein] + CoA. It participates in amino-acid degradation; L-lysine degradation via saccharopine pathway; glutaryl-CoA from L-lysine: step 6/6. Functionally, E2 component of the 2-oxoglutarate dehydrogenase (OGDH) complex which catalyzes the second step in the conversion of 2-oxoglutarate to succinyl-CoA and CO(2). The sequence is that of Dihydrolipoyllysine-residue succinyltransferase component of 2-oxoglutarate dehydrogenase complex (odhB) from Bacillus subtilis (strain 168).